The primary structure comprises 118 residues: Beta-2-microglobulin (118 aa).

The signal sequence occupies residues Met-1–Ala-20. The region spanning Pro-25–Val-112 is the Ig-like C1-type domain. An intrachain disulfide couples Cys-45 to Cys-99.

It belongs to the beta-2-microglobulin family. Heterodimer of an alpha chain and a beta chain. Beta-2-microglobulin is the beta-chain of major histocompatibility complex class I molecules. Forms a heterotrimer with MR1 and a metabolite antigen.

The protein resides in the secreted. Component of the class I major histocompatibility complex (MHC). Involved in the presentation of peptide antigens to the immune system. The sequence is that of Beta-2-microglobulin (B2M) from Bos taurus (Bovine).